The sequence spans 510 residues: Conditioned medium factor receptor 1 (510 aa).

At 1-36 the chain is on the cytoplasmic side; it reads MDSKYIQKTLSAITEQITKNAAVQKVLDNKFVKEHK. A helical membrane pass occupies residues 37–55; sequence YAAAAATVGLGVVAATTIV. Topologically, residues 56–510 are extracellular; it reads KAVNCEGKRY…QGKKQIKKLD (455 aa).

The protein resides in the membrane. Receptor for cmfA, that appears to mediate the G-independent cmfA signal transduction. The polypeptide is Conditioned medium factor receptor 1 (cmfB) (Dictyostelium discoideum (Social amoeba)).